The primary structure comprises 500 residues: MLKRKKVKPITLRDVTIIDDGKLRKAITAASLGNAMEWFDFGVYGFVAYALGKVFFPGADPSVQMVAALATFSVPFLIRPLGGLFFGMLGDKYGRQKILAITIVIMSISTFCIGLIPSYDTIGIWAPILLLICKMAQGFSVGGEYTGASIFVAEYSPDRKRGFMGSWLDFGSIAGFVLGAGVVVLISTIVGEANFLDWGWRIPFFIALPLGIIGLYLRHALEETPAFQQHVDKLEQGDREGLQDGPKVSFKEIATKYWRSLLTCIGLVIATNVTYYMLLTYMPSYLSHNLHYSEDHGVLIIIAIMIGMLFVQPVMGLLSDRFGRRPFVLLGSVALFVLAIPAFILINSNVIGLIFAGLLMLAVILNCFTGVMASTLPAMFPTHIRYSALAAAFNISVLVAGLTPTLAAWLVESSQNLMMPAYYLMVVAVVGLITGVTMKETANRPLKGATPAASDIQEAKEILVEHYDNIEQKIDDIDHEIADLQAKRTRLVQQHPRIDE.

Residues 1–37 (MLKRKKVKPITLRDVTIIDDGKLRKAITAASLGNAME) are Cytoplasmic-facing. Residues 38–58 (WFDFGVYGFVAYALGKVFFPG) form a helical membrane-spanning segment. Residues 59–65 (ADPSVQM) are Periplasmic-facing. A helical transmembrane segment spans residues 66–86 (VAALATFSVPFLIRPLGGLFF). The Cytoplasmic portion of the chain corresponds to 87–97 (GMLGDKYGRQK). The helical transmembrane segment at 98 to 118 (ILAITIVIMSISTFCIGLIPS) threads the bilayer. The Periplasmic portion of the chain corresponds to 119-121 (YDT). Residues 122-142 (IGIWAPILLLICKMAQGFSVG) form a helical membrane-spanning segment. Over 143–169 (GEYTGASIFVAEYSPDRKRGFMGSWLD) the chain is Cytoplasmic. A helical transmembrane segment spans residues 170-190 (FGSIAGFVLGAGVVVLISTIV). The Periplasmic segment spans residues 191–194 (GEAN). A helical transmembrane segment spans residues 195-215 (FLDWGWRIPFFIALPLGIIGL). At 216–260 (YLRHALEETPAFQQHVDKLEQGDREGLQDGPKVSFKEIATKYWRS) the chain is on the cytoplasmic side. Residues 261–281 (LLTCIGLVIATNVTYYMLLTY) form a helical membrane-spanning segment. Over 282 to 297 (MPSYLSHNLHYSEDHG) the chain is Periplasmic. A helical transmembrane segment spans residues 298 to 318 (VLIIIAIMIGMLFVQPVMGLL). Over 319 to 325 (SDRFGRR) the chain is Cytoplasmic. The chain crosses the membrane as a helical span at residues 326 to 346 (PFVLLGSVALFVLAIPAFILI). Topologically, residues 347–350 (NSNV) are periplasmic. A helical membrane pass occupies residues 351-371 (IGLIFAGLLMLAVILNCFTGV). Residues 372–390 (MASTLPAMFPTHIRYSALA) are Cytoplasmic-facing. Residues 391-411 (AAFNISVLVAGLTPTLAAWLV) traverse the membrane as a helical segment. At 412–416 (ESSQN) the chain is on the periplasmic side. Residues 417-437 (LMMPAYYLMVVAVVGLITGVT) traverse the membrane as a helical segment. The Cytoplasmic segment spans residues 438-500 (MKETANRPLK…LVQQHPRIDE (63 aa)). Residues 453–498 (ASDIQEAKEILVEHYDNIEQKIDDIDHEIADLQAKRTRLVQQHPRI) are a coiled coil.

The protein belongs to the major facilitator superfamily. Metabolite:H+ Symporter (MHS) family (TC 2.A.1.6) family.

It is found in the cell inner membrane. Functionally, proton symporter that senses osmotic shifts and responds by importing osmolytes such as proline, glycine betaine, stachydrine, pipecolic acid, ectoine and taurine. It is both an osmosensor and an osmoregulator which is available to participate early in the bacterial osmoregulatory response. The polypeptide is Proline/betaine transporter (proP) (Escherichia coli O157:H7).